Reading from the N-terminus, the 1931-residue chain is Cytadherence high molecular weight protein 2 (1931 aa).

Coiled coils occupy residues 1626–1659 (KEHQWALEEANKKNSRLAKQLKQLKHHKQALTES), 1768–1846 (FNTQ…IKTN), and 1903–1930 (HAKKERINQLANEIKTIKELIEKRKQTS).

Functionally, component of the cytoskeleton-like structure which stabilizes the shape of the wall-less Mycoplasma. This cytoskeleton-like network of accessory proteins containing HMW proteins 1 to 5 allows the proper anchoring of cytadhesin proteins in the mycoplasmal membrane at the attachment organelle. The polypeptide is Cytadherence high molecular weight protein 2 (hlp2) (Mycoplasmoides gallisepticum (strain R(low / passage 15 / clone 2)) (Mycoplasma gallisepticum)).